Consider the following 100-residue polypeptide: Small ribosomal subunit protein uS14c (100 aa).

It belongs to the universal ribosomal protein uS14 family. As to quaternary structure, part of the 30S ribosomal subunit.

Its subcellular location is the plastid. It is found in the chloroplast. Binds 16S rRNA, required for the assembly of 30S particles. This is Small ribosomal subunit protein uS14c from Aethionema grandiflorum (Persian stone-cress).